A 407-amino-acid polypeptide reads, in one-letter code: Peptidase T (407 aa).

H77 is a binding site for Zn(2+). The active site involves D79. D138 provides a ligand contact to Zn(2+). E172 acts as the Proton acceptor in catalysis. Residues E173, D195, and H377 each contribute to the Zn(2+) site.

It belongs to the peptidase M20B family. Zn(2+) is required as a cofactor.

The protein localises to the cytoplasm. It carries out the reaction Release of the N-terminal residue from a tripeptide.. Its function is as follows. Cleaves the N-terminal amino acid of tripeptides. This Aeromonas hydrophila subsp. hydrophila (strain ATCC 7966 / DSM 30187 / BCRC 13018 / CCUG 14551 / JCM 1027 / KCTC 2358 / NCIMB 9240 / NCTC 8049) protein is Peptidase T.